The following is a 357-amino-acid chain: Peptide chain release factor 1 (357 aa).

Residue Q232 is modified to N5-methylglutamine.

It belongs to the prokaryotic/mitochondrial release factor family. In terms of processing, methylated by PrmC. Methylation increases the termination efficiency of RF1.

It is found in the cytoplasm. Its function is as follows. Peptide chain release factor 1 directs the termination of translation in response to the peptide chain termination codons UAG and UAA. The chain is Peptide chain release factor 1 from Nitratidesulfovibrio vulgaris (strain ATCC 29579 / DSM 644 / CCUG 34227 / NCIMB 8303 / VKM B-1760 / Hildenborough) (Desulfovibrio vulgaris).